The primary structure comprises 320 residues: Undecaprenyl-diphosphatase (320 aa).

8 consecutive transmembrane segments (helical) span residues 9 to 29 (FVLV…LEVF), 82 to 102 (GVAF…WYFW), 130 to 150 (LGII…KKLI), 161 to 181 (LGAI…GEKL), 191 to 211 (LTMQ…IPGV), 236 to 256 (FLLG…DVFA), 265 to 285 (LPLI…IAGL), and 296 to 316 (VFIW…SAGI).

The protein belongs to the UppP family.

It localises to the cell inner membrane. It carries out the reaction di-trans,octa-cis-undecaprenyl diphosphate + H2O = di-trans,octa-cis-undecaprenyl phosphate + phosphate + H(+). Its function is as follows. Catalyzes the dephosphorylation of undecaprenyl diphosphate (UPP). Confers resistance to bacitracin. This chain is Undecaprenyl-diphosphatase, found in Trichormus variabilis (strain ATCC 29413 / PCC 7937) (Anabaena variabilis).